Here is a 123-residue protein sequence, read N- to C-terminus: Small ribosomal subunit protein uS13 (123 aa).

Positions 89-123 (GRRHRSGLPVRGQRTRTNARTRKGKRKAVAKKKAK) are disordered. Residues 101–123 (QRTRTNARTRKGKRKAVAKKKAK) are compositionally biased toward basic residues.

This sequence belongs to the universal ribosomal protein uS13 family. In terms of assembly, part of the 30S ribosomal subunit. Forms a loose heterodimer with protein S19. Forms two bridges to the 50S subunit in the 70S ribosome.

Functionally, located at the top of the head of the 30S subunit, it contacts several helices of the 16S rRNA. In the 70S ribosome it contacts the 23S rRNA (bridge B1a) and protein L5 of the 50S subunit (bridge B1b), connecting the 2 subunits; these bridges are implicated in subunit movement. Contacts the tRNAs in the A and P-sites. This Cutibacterium acnes (strain DSM 16379 / KPA171202) (Propionibacterium acnes) protein is Small ribosomal subunit protein uS13.